Reading from the N-terminus, the 119-residue chain is Ribonuclease P protein component (119 aa).

This sequence belongs to the RnpA family. As to quaternary structure, consists of a catalytic RNA component (M1 or rnpB) and a protein subunit.

It catalyses the reaction Endonucleolytic cleavage of RNA, removing 5'-extranucleotides from tRNA precursor.. In terms of biological role, RNaseP catalyzes the removal of the 5'-leader sequence from pre-tRNA to produce the mature 5'-terminus. It can also cleave other RNA substrates such as 4.5S RNA. The protein component plays an auxiliary but essential role in vivo by binding to the 5'-leader sequence and broadening the substrate specificity of the ribozyme. The protein is Ribonuclease P protein component of Shewanella woodyi (strain ATCC 51908 / MS32).